The primary structure comprises 145 residues: Large ribosomal subunit protein bL17 (145 aa).

Residues 123 to 145 (KRVDRKKKDPAKDKTEEKKLATA) form a disordered region.

It belongs to the bacterial ribosomal protein bL17 family. Part of the 50S ribosomal subunit. Contacts protein L32.

In Pelagibacter ubique (strain HTCC1062), this protein is Large ribosomal subunit protein bL17.